The following is a 343-amino-acid chain: Follistatin (343 aa).

The N-terminal stretch at 1–28 is a signal peptide; that stretch reads MLNQRIHPGMLVLLMFLYHFMEDHTAQA. Residues 29–102 form the TB domain; it reads GNCWLRQARN…TCENVDCGPG (74 aa). 8 cysteine pairs are disulfide-bonded: Cys31–Cys54, Cys41–Cys87, Cys55–Cys90, Cys94–Cys105, Cys99–Cys115, Cys117–Cys149, Cys121–Cys142, and Cys131–Cys163. Residues 93–116 form the Follistatin-like 1 domain; that stretch reads TCENVDCGPGKKCKMNKKNKPRCV. Kazal-like domains lie at 99-165, 185-240, and 263-317; these read CGPG…KCKK, NAYC…KCIK, and RGRC…SCNS. N-linked (GlcNAc...) asparagine glycosylation is present at Asn123. The 24-residue stretch at 166-189 folds into the Follistatin-like 2 domain; the sequence is TCRDVLCPGSSTCVVDQTNNAYCV. 3 cysteine pairs are disulfide-bonded: Cys191–Cys224, Cys195–Cys217, and Cys206–Cys238. Positions 243–267 constitute a Follistatin-like 3 domain; it reads SCEDIQCSAGKKCLWDFKVGRGRCA. Cystine bridges form between Cys269-Cys301, Cys273-Cys294, and Cys283-Cys315. Residue Asn287 is glycosylated (N-linked (GlcNAc...) asparagine). The interval 315–343 is disordered; it reads CNSINEDPEEEEEDEDQDYSFPISSILEW. A compositionally biased stretch (acidic residues) spans 320 to 332; that stretch reads EDPEEEEEDEDQD.

As to quaternary structure, monomer. As to expression, ciliary ganglion neurons. Levels are higher in the iris than the choroid.

Its subcellular location is the secreted. Binds directly to activin and functions as an activin antagonist. Inhibits activin A signaling in the iris and regulates somatostatin phenotype in ciliary ganglion neurons. Specific inhibitor of the biosynthesis and secretion of pituitary follicle stimulating hormone (FSH). This is Follistatin (FST) from Gallus gallus (Chicken).